We begin with the raw amino-acid sequence, 123 residues long: TYMS opposite strand protein (123 aa).

The interval 57 to 111 (MRPLPRRIEVRTKRGPQRPAAPERSPQPRLPPSRHPSRRGPRRHLSGCSAPACRI) is disordered. Over residues 91–101 (HPSRRGPRRHL) the composition is skewed to basic residues.

The polypeptide is TYMS opposite strand protein (TYMSOS) (Homo sapiens (Human)).